We begin with the raw amino-acid sequence, 224 residues long: Dickkopf-related protein 4 (224 aa).

An N-terminal signal peptide occupies residues 1–18 (MVAAVLLGLSWLCSPLGA). The DKK-type Cys-1 stretch occupies residues 41 to 90 (CLSDTDCNTRKFCLQPRDEKPFCATCRGLRRRCQRDAMCCPGTLCVNDVC). The disordered stretch occupies residues 109–139 (GTHAEGTTGHPVQENQPKRKPSIKKSQGRKG). A compositionally biased stretch (basic residues) spans 126 to 136 (KRKPSIKKSQG). Intrachain disulfides connect Cys-145/Cys-157, Cys-151/Cys-166, Cys-156/Cys-194, Cys-176/Cys-202, and Cys-196/Cys-218. Residues 145–218 (CLRTFDCGPG…NRQHARLRVC (74 aa)) form a DKK-type Cys-2 region.

Belongs to the dickkopf family. In terms of assembly, interacts with LRP5 and LRP6. In terms of processing, appears to be not glycosylated. Can be proteolytically processed by a furin-like protease. In terms of tissue distribution, expressed in cerebellum, T-cells, esophagus and lung.

Its subcellular location is the secreted. Its function is as follows. Antagonizes canonical Wnt signaling by inhibiting LRP5/6 interaction with Wnt and by forming a ternary complex with the transmembrane protein KREMEN that promotes internalization of LRP5/6. DKKs play an important role in vertebrate development, where they locally inhibit Wnt regulated processes such as antero-posterior axial patterning, limb development, somitogenesis and eye formation. In the adult, Dkks are implicated in bone formation and bone disease, cancer and Alzheimer disease. The sequence is that of Dickkopf-related protein 4 (DKK4) from Homo sapiens (Human).